We begin with the raw amino-acid sequence, 130 residues long: MAAEQYYGTGRRKTSTARVFLTLGGGKITVNGKTLDEYFGREVARMIVRQPIELTDNVEKFDINVTVKGGGSFGQAGAIRHGLTRALMAYDEAMRPTLRAAGYVTRDAREVERKKVGLRKARKKPQFSKR.

This sequence belongs to the universal ribosomal protein uS9 family.

This Saccharophagus degradans (strain 2-40 / ATCC 43961 / DSM 17024) protein is Small ribosomal subunit protein uS9.